Reading from the N-terminus, the 457-residue chain is Tubulin beta chain (457 aa).

8 residues coordinate GTP: Gln11, Glu69, Ser138, Gly142, Thr143, Gly144, Asn204, and Asn226. Glu69 contacts Mg(2+). Phosphoserine occurs at positions 278 and 280. The disordered stretch occupies residues 423-457 (QQYQEATVEDDEEVDENGDFGAPQNQDEPITENFE). Residues 429-440 (TVEDDEEVDENG) are compositionally biased toward acidic residues.

Belongs to the tubulin family. In terms of assembly, dimer of alpha and beta chains. A typical microtubule is a hollow water-filled tube with an outer diameter of 25 nm and an inner diameter of 15 nM. Alpha-beta heterodimers associate head-to-tail to form protofilaments running lengthwise along the microtubule wall with the beta-tubulin subunit facing the microtubule plus end conferring a structural polarity. Microtubules usually have 13 protofilaments but different protofilament numbers can be found in some organisms and specialized cells. Mg(2+) serves as cofactor.

It localises to the cytoplasm. The protein resides in the cytoskeleton. In terms of biological role, tubulin is the major constituent of microtubules, a cylinder consisting of laterally associated linear protofilaments composed of alpha- and beta-tubulin heterodimers. Microtubules grow by the addition of GTP-tubulin dimers to the microtubule end, where a stabilizing cap forms. Below the cap, tubulin dimers are in GDP-bound state, owing to GTPase activity of alpha-tubulin. The polypeptide is Tubulin beta chain (TUB2) (Saccharomyces cerevisiae (strain ATCC 204508 / S288c) (Baker's yeast)).